The primary structure comprises 445 residues: UPF0210 protein SPP_0289 (445 aa).

The protein belongs to the UPF0210 family. Homodimer.

The chain is UPF0210 protein SPP_0289 from Streptococcus pneumoniae (strain P1031).